The sequence spans 427 residues: Proteinase-activated receptor 1 (427 aa).

A signal peptide spans 1-21 (MGPRWLLLWAAGLGLCSPLVS). A propeptide spans 22–41 (ARTRGPRPGTDPTNGTLGPR) (removed for receptor activation). Positions 23 to 87 (RTRGPRPGTD…RSSPPQKSPP (65 aa)) are disordered. Asparagine 35 carries N-linked (GlcNAc...) asparagine glycosylation. Residues 42–104 (SFFLRNSNDG…SGYLTSAWLT (63 aa)) lie on the Extracellular side of the membrane. Residues 58–68 (PEDEDSSEGEF) show a composition bias toward acidic residues. Asparagine 77 is a glycosylation site (N-linked (GlcNAc...) asparagine). Residues 105–130 (VFIPSVYTGVFLVSLPLNIMAVVVFV) traverse the membrane as a helical segment. Topologically, residues 131-139 (LKMKVKKPA) are cytoplasmic. The chain crosses the membrane as a helical span at residues 140–159 (VVYMLHLAAADVLFVCVLPF). Residues 160-178 (KISYYFSGSDWRFGSAMCR) are Extracellular-facing. Cysteine 177 and cysteine 256 form a disulfide bridge. A helical transmembrane segment spans residues 179 to 200 (FVTAAFYGNMYASIMLMTAISV). Residues 201–220 (DRFLAVVYPIQSLSWRTLGR) are Cytoplasmic-facing. The chain crosses the membrane as a helical span at residues 221–241 (ASFICLAIWAMAIAGVAPLLL). At 242–270 (QEQATQVPGLNITACHDVLNQTLLEGYYS) the chain is on the extracellular side. Residues asparagine 252 and asparagine 261 are each glycosylated (N-linked (GlcNAc...) asparagine). A helical transmembrane segment spans residues 271–290 (YYFSAFSAVFFFVPLTLSTV). At 291–313 (SYVSIIRCLSSSTVANQNKKSRA) the chain is on the cytoplasmic side. The helical transmembrane segment at 314-336 (LLLSAAVFCIFILCFGPTNILLL) threads the bilayer. At 337–351 (LHYAFLSSDPMTEAA) the chain is on the extracellular side. Residues 352 to 376 (YFAYLLCVCVSSISCCIDPLIYYYA) traverse the membrane as a helical segment. Residues 377–427 (SSECQRHLFAILHCKESSDPGSCNSSGQLMPSKMDTCSSNLSSSLYKKLLT) are Cytoplasmic-facing. Serine 420 is modified (phosphoserine).

Belongs to the G-protein coupled receptor 1 family. Proteolytic cleavage by thrombin generates a new N-terminus that functions as a tethered ligand. Also proteolytically cleaved by cathepsin CTSG. Post-translationally, phosphorylated in the C-terminal tail; probably mediating desensitization prior to the uncoupling and internalization of the receptor.

Its subcellular location is the cell membrane. In terms of biological role, high affinity receptor that binds the activated thrombin, leading to calcium release from intracellular stores. The thrombin-activated receptor signaling pathway is mediated through PTX-insensitive G proteins, activation of phospholipase C resulting in the production of 1D-myo-inositol 1,4,5-trisphosphate (InsP3) which binds to InsP3 receptors causing calcium release from the stores. In astrocytes, the calcium released into the cytosol allows the Ca(2+)-dependent release of L-glutamate into the synaptic cleft through BEST1, that targets the neuronal postsynaptic GRIN2A/NMDAR receptor resulting in the synaptic plasticity regulation. May play a role in platelets activation and in vascular development. Mediates up-regulation of pro-inflammatory cytokines, such as MCP-1/CCL2 and IL6, triggered by coagulation factor Xa (F10) in cardiac fibroblasts and umbilical vein endothelial cells. This chain is Proteinase-activated receptor 1, found in Bos taurus (Bovine).